We begin with the raw amino-acid sequence, 209 residues long: MTKKPIVVGVTGGSGSGKTSVTKAICDHFSGHSILMIAQDVYYHDQANISFEDRLKVNYDHPLAFDTDLLISHIAALRRYETIEKPIYDYAKYTRKKEVEIQEPREVIILEGILILEDKRLRDLMDIKVYVDTDDDIRFIRRLLRDMKERGRTMDSVIEQYLSVVKPMHNEFIEPTKKFADIIIPEGGENHVAIDLMTTKIESILQKHV.

12–19 (GGSGSGKT) provides a ligand contact to ATP.

Belongs to the uridine kinase family.

It is found in the cytoplasm. The enzyme catalyses uridine + ATP = UMP + ADP + H(+). The catalysed reaction is cytidine + ATP = CMP + ADP + H(+). It participates in pyrimidine metabolism; CTP biosynthesis via salvage pathway; CTP from cytidine: step 1/3. The protein operates within pyrimidine metabolism; UMP biosynthesis via salvage pathway; UMP from uridine: step 1/1. In Listeria monocytogenes serotype 4b (strain CLIP80459), this protein is Uridine kinase.